Consider the following 882-residue polypeptide: Envelope glycoprotein gp160 (882 aa).

Residues 1–22 (MGCLGNQLLIAILLLSVYGIYC) form the signal peptide. Residues 23 to 697 (IQYVTVFYGV…TSWIKYIQYG (675 aa)) are Extracellular-facing. N37 carries an N-linked (GlcNAc...) asparagine; by host glycan. A disulfide bridge connects residues C44 and C57. Residues N70, N114, N149, N159, N174, N187, N201, N205, N215, N247, N250, N257, N281, N287, N298, N309, N319, N374, and N380 are each glycosylated (N-linked (GlcNAc...) asparagine; by host). 5 disulfide bridges follow: C101–C223, C108–C214, C113–C171, C236–C266, and C246–C258. A V1 region spans residues 113-170 (CNKSETDKWGLTKSSTTTASTTTTTTAKSVETRDIVNETSPCVVHDNCTGLEQEPMIS). The V2 stretch occupies residues 171–214 (CKFNMTGLKRDKKKEYNETWYSADLVCEQGNSTGNESRCYMNHC). The segment at 314–346 (CRRPGNKTVLPVTIMSALVFHSQPVNERPKQAW) is V3. A disulfide bridge connects residues C314 and C347. Disulfide bonds link C398/C462 and C405/C435. Positions 405 to 435 (CKMNWFLNWVEDRSLTTQKPKERHKRNYVPC) are V4. N463, N474, and N479 each carry an N-linked (GlcNAc...) asparagine; by host glycan. A V5 region spans residues 478-485 (GNQTSITM). The fusion peptide stretch occupies residues 529–549 (GVFVLGFLGFLATAGSAMGAA). The immunosuppression stretch occupies residues 592 to 608 (LQTRVSAIEKYLKDQAQ). 3 N-linked (GlcNAc...) asparagine; by host glycosylation sites follow: N628, N637, and N653. The stretch at 637-669 (NETWQEWERKVDFLEANITALLEEAQIQQEKNM) forms a coiled coil. Positions 674–695 (KLNSWDVFGNWFDLTSWIKYIQ) are MPER; binding to GalCer. A helical transmembrane segment spans residues 698–718 (IYIIVGVILLRIVIYIVQMLA). The Cytoplasmic portion of the chain corresponds to 719 to 882 (RLRQGYRPVF…IRQGLELTLL (164 aa)). Positions 724-727 (YRPV) match the YXXV motif; contains endocytosis signal motif. The tract at residues 738–761 (THTQQDPALPTKEGKKGDGGGSGG) is disordered. C790 carries the S-palmitoyl cysteine; by host lipid modification. A Di-leucine internalization motif motif is present at residues 881–882 (LL).

As to quaternary structure, the mature envelope protein (Env) consists of a homotrimer of non-covalently associated gp120-gp41 heterodimers. The resulting complex protrudes from the virus surface as a spike. Interacts with host CD4 and CCR5. Gp120 also interacts with the C-type lectins CD209/DC-SIGN and CLEC4M/DC-SIGNR (collectively referred to as DC-SIGN(R)). The mature envelope protein (Env) consists of a homotrimer of non-covalently associated gp120-gp41 heterodimers. The resulting complex protrudes from the virus surface as a spike. Post-translationally, specific enzymatic cleavages in vivo yield mature proteins. Envelope glycoproteins are synthesized as an inactive precursor that is heavily N-glycosylated and processed likely by host cell furin in the Golgi to yield the mature SU and TM proteins. The cleavage site between SU and TM requires the minimal sequence [KR]-X-[KR]-R. In terms of processing, palmitoylation of the transmembrane protein and of Env polyprotein (prior to its proteolytic cleavage) is essential for their association with host cell membrane lipid rafts. Palmitoylation is therefore required for envelope trafficking to classical lipid rafts, but not for viral replication.

It is found in the virion membrane. The protein localises to the host cell membrane. It localises to the host endosome membrane. Its function is as follows. The surface protein gp120 (SU) attaches the virus to the host lymphoid cell by binding to the primary receptor CD4. This interaction induces a structural rearrangement creating a high affinity binding site for a chemokine coreceptor like CCR5. This peculiar 2 stage receptor-interaction strategy allows gp120 to maintain the highly conserved coreceptor-binding site in a cryptic conformation, protected from neutralizing antibodies. These changes are transmitted to the transmembrane protein gp41 and are thought to activate its fusogenic potential by unmasking its fusion peptide. Functionally, surface protein gp120 (SU) may target the virus to gut-associated lymphoid tissue (GALT) by binding host ITGA4/ITGB7 (alpha-4/beta-7 integrins), a complex that mediates T-cell migration to the GALT. Interaction between gp120 and ITGA4/ITGB7 would allow the virus to enter GALT early in the infection, infecting and killing most of GALT's resting CD4+ T-cells. This T-cell depletion is believed to be the major insult to the host immune system leading to AIDS. The surface protein gp120 is a ligand for CD209/DC-SIGN and CLEC4M/DC-SIGNR, which are respectively found on dendritic cells (DCs), and on endothelial cells of liver sinusoids and lymph node sinuses. These interactions allow capture of viral particles at mucosal surfaces by these cells and subsequent transmission to permissive cells. DCs are professional antigen presenting cells, critical for host immunity by inducing specific immune responses against a broad variety of pathogens. They act as sentinels in various tissues where they take up antigen, process it, and present it to T-cells following migration to lymphoid organs. SIV subverts the migration properties of dendritic cells to gain access to CD4+ T-cells in lymph nodes. Virus transmission to permissive T-cells occurs either in trans (without DCs infection, through viral capture and transmission), or in cis (following DCs productive infection, through the usual CD4-gp120 interaction), thereby inducing a robust infection. In trans infection, bound virions remain infectious over days and it is proposed that they are not degraded, but protected in non-lysosomal acidic organelles within the DCs close to the cell membrane thus contributing to the viral infectious potential during DCs' migration from the periphery to the lymphoid tissues. On arrival at lymphoid tissues, intact virions recycle back to DCs' cell surface allowing virus transmission to CD4+ T-cells. Virion capture also seems to lead to MHC-II-restricted viral antigen presentation, and probably to the activation of SIV-specific CD4+ cells. In terms of biological role, the transmembrane protein gp41 (TM) acts as a class I viral fusion protein. Under the current model, the protein has at least 3 conformational states: pre-fusion native state, pre-hairpin intermediate state, and post-fusion hairpin state. During fusion of viral and target intracellular membranes, the coiled coil regions (heptad repeats) assume a trimer-of-hairpins structure, positioning the fusion peptide in close proximity to the C-terminal region of the ectodomain. The formation of this structure appears to drive apposition and subsequent fusion of viral and target cell membranes. Complete fusion occurs in host cell endosomes. The virus undergoes clathrin-dependent internalization long before endosomal fusion, thus minimizing the surface exposure of conserved viral epitopes during fusion and reducing the efficacy of inhibitors targeting these epitopes. Membranes fusion leads to delivery of the nucleocapsid into the cytoplasm. Its function is as follows. The envelope glycoprotein gp160 precursor down-modulates cell surface CD4 antigen by interacting with it in the endoplasmic reticulum and blocking its transport to the cell surface. Functionally, the gp120-gp41 heterodimer allows rapid transcytosis of the virus through CD4 negative cells such as simple epithelial monolayers of the intestinal, rectal and endocervical epithelial barriers. Both gp120 and gp41 specifically recognize glycosphingolipids galactosyl-ceramide (GalCer) or 3' sulfo-galactosyl-ceramide (GalS) present in the lipid rafts structures of epithelial cells. Binding to these alternative receptors allows the rapid transcytosis of the virus through the epithelial cells. This transcytotic vesicle-mediated transport of virions from the apical side to the basolateral side of the epithelial cells does not involve infection of the cells themselves. The polypeptide is Envelope glycoprotein gp160 (env) (Simian immunodeficiency virus (isolate Mm142-83) (SIV-mac)).